Consider the following 885-residue polypeptide: MNPTLSRGGAPSRFVRGRGRGGGAYRPYFYFRRNGRVIPAGGNRQPNQGEPGAPDAPSVPPATRQPRGWSRTAGKRGRNAHLDCSFLRPENYAAPEDGLQVQSIAVDNPRAYSGWRLYFLREKYEEGNELATRIMAVEAYYQRNPHTFDFVMIRDRGFFPLCAAGIKSDAQLKEVWPSLSEDIREHPLRTLGTLSLAMHTVVVNHQLDCNDSTTAMVSTPEQYVLPTPRVRKIYARPDDFVPVESIEGISHSRVDTLFSIRGFVSNVGEPSYSLTWQAFRCSRCQMEIAMRQRGTFQPRPYQCKRSECVARDEFVPLRSSPYTRLSIRQIIRVEESSLNLVHDFETSMPAEMDVELRHDLVDAVRVGQEVVVTGILKLQELGDDTTTGDTSNQMQPYLKAVSIRDASSIKREFSERDLEAIVMINAEPNSFKLLVQSIAPEVYGHELPKAACLLSLLGGKGAETEAINVLLVGDPGIGKTKILQSCAQIAERGAHVSGKRGAQSAQQLGVTFAGRNKRVLQAGSLMMASGGGHCTLDDVDKLASKQAVLLQCLQSEEVNLPLAGAFASFPAQPSVIACANPQRGQYDEGRYLLQNINISPSLLREFHLVYILLDKPSERDMSLTAHVRALHAGARKRARIAARYALKPKMSDSMCEVSLNVPAAGKDDDTIKTEDDNDSIMQQDYDLDKRLEVLPEEGDLDLLPPILIKKFLSYARQELNPVLNEDASNAVLRYFLELKGSCNLDEDVSSQIGAGQLLAIIHLSQARARLDLSHVVSPQHVRDVIALLTESITQTSLKEGSSRQGTRGGGGAGGGAGKSAQLRNFLELTKRRSAALGRRIFEFDELKEIGTRAGILTGFSQLVEMANLGGYLLMKGANMYEVVPD.

Residues 36–76 (RVIPAGGNRQPNQGEPGAPDAPSVPPATRQPRGWSRTAGKR) are disordered. A C4-type zinc finger spans residues 281–308 (CSRCQMEIAMRQRGTFQPRPYQCKRSEC). Positions 430–627 (SFKLLVQSIA…ERDMSLTAHV (198 aa)) constitute an MCM domain. Residue 473–480 (GDPGIGKT) coordinates ATP. Residues 796–805 (SLKEGSSRQG) are compositionally biased toward polar residues. The interval 796–818 (SLKEGSSRQGTRGGGGAGGGAGK) is disordered. A compositionally biased stretch (gly residues) spans 806 to 817 (TRGGGGAGGGAG).

This sequence belongs to the MCM family.

The protein resides in the nucleus. Required for meiotic DNA recombination in females. Probably not involved in DNA repair and recombination in somatic cells. In Drosophila melanogaster (Fruit fly), this protein is DNA replication licensing factor REC (rec).